A 251-amino-acid chain; its full sequence is Octanoyltransferase (251 aa).

The BPL/LPL catalytic domain occupies 56 to 241 (ADTGDEIWVV…NLDGASAAAD (186 aa)). Substrate contacts are provided by residues 96–103 (RGGQITYH), 168–170 (ALG), and 181–183 (GLS). The Acyl-thioester intermediate role is filled by C199.

This sequence belongs to the LipB family.

Its subcellular location is the cytoplasm. The catalysed reaction is octanoyl-[ACP] + L-lysyl-[protein] = N(6)-octanoyl-L-lysyl-[protein] + holo-[ACP] + H(+). The protein operates within protein modification; protein lipoylation via endogenous pathway; protein N(6)-(lipoyl)lysine from octanoyl-[acyl-carrier-protein]: step 1/2. Catalyzes the transfer of endogenously produced octanoic acid from octanoyl-acyl-carrier-protein onto the lipoyl domains of lipoate-dependent enzymes. Lipoyl-ACP can also act as a substrate although octanoyl-ACP is likely to be the physiological substrate. The sequence is that of Octanoyltransferase from Burkholderia orbicola (strain AU 1054).